A 395-amino-acid polypeptide reads, in one-letter code: MILGNGKTLPKHIRLAHIFATQNSSAKKDNPLGPEGMVTKDGFIISKEEWAFVQAYVTTGTGLPINDDEMRRHVGLPSRIQIPDDFNQLYKVYNEDKHLCSWWNGFLFPLVLKTANDISAYGFKCAGKGATKGYYEVMQDDVENISDNGYDKVAQEKAHKDLQARCKILIKEADQYKAAADDVSKHLNTFLKGGQDSDGNDVIGVEAVQVQLAQVKDNLDGLYGDKSPRHEELLKKVDDLKKELEAAIKAENELEKKVKMSFALGPLLGFVVYEILELTAVKSIHKKVEALQAELDTANDELDRDVKILGMMNSIDTDIDNMLEQGEQALVVFRKIAGIWSVISLNIGNLRETSLKEIEEENDDDALYIELGDAAGQWKEIAEEAQSFVLNAYTP.

This sequence belongs to the cry6A endotoxin family.

In terms of biological role, endotoxin with nematicidal activity. This chain is Pesticidal crystal protein Cry6Ba (cry6Ba), found in Bacillus thuringiensis.